Reading from the N-terminus, the 232-residue chain is Clarin-1 (232 aa).

A helical membrane pass occupies residues 8–28 (IIFCMAGVLSFLCALGVVTAV). N48 is a glycosylation site (N-linked (GlcNAc...) asparagine). 2 consecutive transmembrane segments (helical) span residues 101 to 121 (IILF…FFMY) and 135 to 155 (LGLY…MILF). The N-linked (GlcNAc...) asparagine glycan is linked to N184. A helical transmembrane segment spans residues 186 to 206 (TTSFWVVFICFFVHFLNGLLI).

It belongs to the clarin family.

The protein localises to the cell membrane. Functionally, may have a role in the excitatory ribbon synapse junctions between hair cells and cochlear ganglion cells and presumably also in analogous synapses within the retina. This Mus musculus (Mouse) protein is Clarin-1 (Clrn1).